Reading from the N-terminus, the 179-residue chain is GTP-dependent dephospho-CoA kinase (179 aa).

GTP-binding residues include Asp-50, Val-51, Val-52, Asp-69, Lys-71, and Glu-126.

This sequence belongs to the GTP-dependent DPCK family.

It catalyses the reaction 3'-dephospho-CoA + GTP = GDP + CoA + H(+). It participates in cofactor biosynthesis; coenzyme A biosynthesis. Catalyzes the GTP-dependent phosphorylation of the 3'-hydroxyl group of dephosphocoenzyme A to form coenzyme A (CoA). The protein is GTP-dependent dephospho-CoA kinase of Pyrococcus horikoshii (strain ATCC 700860 / DSM 12428 / JCM 9974 / NBRC 100139 / OT-3).